The sequence spans 176 residues: Adenine phosphoribosyltransferase (176 aa).

Belongs to the purine/pyrimidine phosphoribosyltransferase family. Homodimer.

The protein resides in the cytoplasm. It carries out the reaction AMP + diphosphate = 5-phospho-alpha-D-ribose 1-diphosphate + adenine. It participates in purine metabolism; AMP biosynthesis via salvage pathway; AMP from adenine: step 1/1. In terms of biological role, catalyzes a salvage reaction resulting in the formation of AMP, that is energically less costly than de novo synthesis. This Borreliella afzelii (strain PKo) (Borrelia afzelii) protein is Adenine phosphoribosyltransferase.